Reading from the N-terminus, the 480-residue chain is Pyruvate kinase II (480 aa).

R36 serves as a coordination point for substrate. K(+) is bound by residues N38, S40, and D70. Position 38–41 (38–41) interacts with ATP; sequence NFSH. Residues R77 and K160 each coordinate ATP. K223 lines the substrate pocket. Mg(2+) is bound at residue E225. Residues G251, D252, and T284 each contribute to the substrate site. A Mg(2+)-binding site is contributed by D252.

It belongs to the pyruvate kinase family. As to quaternary structure, homotetramer. Mg(2+) serves as cofactor. Requires K(+) as cofactor.

The enzyme catalyses pyruvate + ATP = phosphoenolpyruvate + ADP + H(+). The protein operates within carbohydrate degradation; glycolysis; pyruvate from D-glyceraldehyde 3-phosphate: step 5/5. Its activity is regulated as follows. Allosterically activated by AMP and by several sugar phosphates. Belongs to type II PK. In terms of biological role, catalyzes the formation of pyruvate in the last step of glycolysis, it is irreversible under physiological conditions. The reaction is critical for the control of metabolic flux in the second part of glycolysis. This chain is Pyruvate kinase II (pykA), found in Salmonella typhimurium (strain LT2 / SGSC1412 / ATCC 700720).